Reading from the N-terminus, the 1299-residue chain is Sophorolipid transporter (1299 aa).

Residues 1–64 (MVDDIQVEKR…FCTPLDVFLE (64 aa)) are Cytoplasmic-facing. The chain crosses the membrane as a helical span at residues 65-85 (ILALFFAAVHGAALPMFTLVV). The 292-residue stretch at 65–356 (ILALFFAAVH…IAPNVRFLVK (292 aa)) folds into the ABC transmembrane type-1 1 domain. Residues 86-114 (GAIFNTFRDFTSYDLKGNEFQHKVNHLSL) lie on the Extracellular side of the membrane. Residues 115–135 (YFVYIGIGMLGSAFLESFLLV) traverse the membrane as a helical segment. At 136–187 (DRGEVLAGRYRKHYLSAVIRQNIAFYDKLGGGEVSTRIINDTNSIQEAISDK) the chain is on the cytoplasmic side. A helical transmembrane segment spans residues 188 to 208 (LGNVVQGIASFIAATVISFAS). Topologically, residues 209–214 (QWKLAC) are extracellular. A helical membrane pass occupies residues 215 to 235 (ILLSAVGFMVITMGTGATFMA). The Cytoplasmic portion of the chain corresponds to 236-293 (KYQLRSDAIYSQSGATVAEEALSAVRTTVAFGAQPHLAVKYEKVLDRVVKESKRSSYS). A helical membrane pass occupies residues 294-314 (LGVMLACIWASTFWVYALALW). Residues 315 to 326 (QGSREIVSGSAD) lie on the Extracellular side of the membrane. The helical transmembrane segment at 327–347 (VGKIIVVITAMLLGSFQLGNI) threads the bilayer. Residues 348-725 (APNVRFLVKG…WGLNRKEWGY (378 aa)) lie on the Cytoplasmic side of the membrane. One can recognise an ABC transporter 1 domain in the interval 393-638 (IELKNVKFRY…EGPYKALVDA (246 aa)). An ATP-binding site is contributed by 428–435 (GASGSGKS). A compositionally biased stretch (polar residues) spans 681-690 (SAGTQTTQPP). The tract at residues 681–703 (SAGTQTTQPPEYQENDIPGVRNP) is disordered. A helical transmembrane segment spans residues 726–746 (ILIGSLASIILGYCYPAMAII). Residues 727–1016 (LIGSLASIIL…IFSYAPNMNS (290 aa)) enclose the ABC transmembrane type-1 2 domain. Residues 747–769 (TGQTTGSMVLPPSEYGKMRHVVN) lie on the Extracellular side of the membrane. The chain crosses the membrane as a helical span at residues 770–790 (IMGWWYFFVGCISFMTAFITI). Residues 791 to 848 (AALSLASDKLVKNIRLALFRQLMRMDIAFFDHKNNTPGALTSILAKEAKMIEGLSGAT) lie on the Cytoplasmic side of the membrane. Residues 849-869 (LGQIQQSLVTLIGGIVTGIPF) form a helical membrane-spanning segment. Over 870 to 874 (NWRIG) the chain is Extracellular. Residues 875–895 (LVATSVVPVMLVCGFVRVWVL) form a helical membrane-spanning segment. Topologically, residues 896–954 (TQLSDRAREVYERSGSMASEYTSAVRTVQSLTRELDVVVKYTKTVDSQIFSSRIAIARS) are cytoplasmic. A helical membrane pass occupies residues 955–975 (ALYYALSEGMTPWVVALVFWW). Residues 976–987 (GSTVMRRGEASV) are Extracellular-facing. Residues 988-1008 (AGYMTVFMAIITGSQAAGQIF) form a helical membrane-spanning segment. The Cytoplasmic segment spans residues 1009–1299 (SYAPNMNSAK…LVNLQGLGEI (291 aa)). Residues 1053–1293 (IEFRHVNFRY…NGWYAELVNL (241 aa)) enclose the ABC transporter 2 domain. ATP is bound at residue 1088 to 1095 (GASGCGKS).

Belongs to the ABC transporter superfamily. ABCB family. Multidrug resistance exporter (TC 3.A.1.201) subfamily.

The protein resides in the cell membrane. Transports acidic acylated and non-acylated sophorolipids (SLs) into the extracellular space, where they can be lactonized by lactone esterase. This is Sophorolipid transporter (mdr) from Starmerella bombicola (Yeast).